The sequence spans 383 residues: Neuropeptide Y receptor type 1 (383 aa).

Topologically, residues 1–34 (MNSTSFSQLENHSVHYNLSEEKPSFFAFENDDCH) are extracellular. Asn-2, Asn-11, and Asn-17 each carry an N-linked (GlcNAc...) asparagine glycan. The helical transmembrane segment at 35 to 55 (LPLAVIFTLALAYGAVIILGV) threads the bilayer. Topologically, residues 56–87 (SGNLALILIILKQKEMRNVTNILIVNLSFSDL) are cytoplasmic. The chain crosses the membrane as a helical span at residues 88 to 108 (LVAIMCLPFTFVYTLMDHWIF). The Extracellular segment spans residues 109–116 (GEIMCKLN). Cysteines 113 and 198 form a disulfide. The chain crosses the membrane as a helical span at residues 117 to 137 (PFVQCVSITVSIFSLVLIAVE). The Cytoplasmic segment spans residues 138 to 154 (RHQLIINPRGWRPNNRH). A helical membrane pass occupies residues 155 to 175 (AYIGIAVIWVLAVASSLPFMI). At 176-211 (YQVLTDEPFQNVTLDAFKDKLVCFDQFPSDSHRLSY) the chain is on the extracellular side. The helical transmembrane segment at 212 to 232 (TTLLLVLQYFGPLCFIFICYF) threads the bilayer. The Cytoplasmic segment spans residues 233 to 260 (KIYIRLKRRNNMMDKMRDSKYRSSESKR). The chain crosses the membrane as a helical span at residues 261–281 (INIMLLSIVVAFAVCWLPLTI). Topologically, residues 282 to 299 (FNTVFDWNHQIIATCNHN) are extracellular. Residues 300-320 (LLFLLCHLTAMISTCVNPIFY) form a helical membrane-spanning segment. At 321–383 (GFLNKNFQRD…KISCVENEKI (63 aa)) the chain is on the cytoplasmic side. Residue Cys-338 is the site of S-palmitoyl cysteine attachment. Phosphoserine occurs at positions 368 and 376.

Belongs to the G-protein coupled receptor 1 family.

Its subcellular location is the cell membrane. Its function is as follows. Receptor for neuropeptide Y and peptide YY. In Cavia porcellus (Guinea pig), this protein is Neuropeptide Y receptor type 1 (NPY1R).